The following is a 300-amino-acid chain: Acetylglutamate kinase (300 aa).

Residues 73–74, Arg95, and Asn197 each bind substrate; that span reads GG.

It belongs to the acetylglutamate kinase family. ArgB subfamily.

The protein localises to the cytoplasm. The enzyme catalyses N-acetyl-L-glutamate + ATP = N-acetyl-L-glutamyl 5-phosphate + ADP. Its pathway is amino-acid biosynthesis; L-arginine biosynthesis; N(2)-acetyl-L-ornithine from L-glutamate: step 2/4. Functionally, catalyzes the ATP-dependent phosphorylation of N-acetyl-L-glutamate. The sequence is that of Acetylglutamate kinase from Bordetella bronchiseptica (strain ATCC BAA-588 / NCTC 13252 / RB50) (Alcaligenes bronchisepticus).